The sequence spans 309 residues: MRRVILNNPRGFCAGVVRAIQVVETALEKWGAPIYVKHEIVHNRHVVDDLKRRGAIFIEDLSDVPSGEKVVYSAHGIPPEVREEARTRNLFDIDATCVLVTKIHSAVKLYASKGYQIILIGKKKHVEVIGIRGEAPESVTVVEKVEDVANLPFEESVPLFFVTQTTLSLDDVAEITQALKVRYPHIITLPSSSVCYATQNRQEALRSVLPKVNFVYVIGDVQSSNSNRLREVAEKRNIPARLVNSPDHISDEILNYSGDIAITAGASTPEHIVQSCISRLKELIPDLQVEEDIFAIEDVVFQPPKELRN.

C13 is a [4Fe-4S] cluster binding site. 2 residues coordinate (2E)-4-hydroxy-3-methylbut-2-enyl diphosphate: H42 and H75. Residues H42 and H75 each contribute to the dimethylallyl diphosphate site. 2 residues coordinate isopentenyl diphosphate: H42 and H75. C97 contributes to the [4Fe-4S] cluster binding site. H125 serves as a coordination point for (2E)-4-hydroxy-3-methylbut-2-enyl diphosphate. H125 contacts dimethylallyl diphosphate. Position 125 (H125) interacts with isopentenyl diphosphate. The active-site Proton donor is the E127. T165 lines the (2E)-4-hydroxy-3-methylbut-2-enyl diphosphate pocket. C195 provides a ligand contact to [4Fe-4S] cluster. (2E)-4-hydroxy-3-methylbut-2-enyl diphosphate is bound by residues S223, S224, N225, and S267. Residues S223, S224, N225, and S267 each contribute to the dimethylallyl diphosphate site. S223, S224, N225, and S267 together coordinate isopentenyl diphosphate.

Belongs to the IspH family. [4Fe-4S] cluster is required as a cofactor.

It carries out the reaction isopentenyl diphosphate + 2 oxidized [2Fe-2S]-[ferredoxin] + H2O = (2E)-4-hydroxy-3-methylbut-2-enyl diphosphate + 2 reduced [2Fe-2S]-[ferredoxin] + 2 H(+). The enzyme catalyses dimethylallyl diphosphate + 2 oxidized [2Fe-2S]-[ferredoxin] + H2O = (2E)-4-hydroxy-3-methylbut-2-enyl diphosphate + 2 reduced [2Fe-2S]-[ferredoxin] + 2 H(+). It participates in isoprenoid biosynthesis; dimethylallyl diphosphate biosynthesis; dimethylallyl diphosphate from (2E)-4-hydroxy-3-methylbutenyl diphosphate: step 1/1. Its pathway is isoprenoid biosynthesis; isopentenyl diphosphate biosynthesis via DXP pathway; isopentenyl diphosphate from 1-deoxy-D-xylulose 5-phosphate: step 6/6. Functionally, catalyzes the conversion of 1-hydroxy-2-methyl-2-(E)-butenyl 4-diphosphate (HMBPP) into a mixture of isopentenyl diphosphate (IPP) and dimethylallyl diphosphate (DMAPP). Acts in the terminal step of the DOXP/MEP pathway for isoprenoid precursor biosynthesis. In Chlamydia caviae (strain ATCC VR-813 / DSM 19441 / 03DC25 / GPIC) (Chlamydophila caviae), this protein is 4-hydroxy-3-methylbut-2-enyl diphosphate reductase.